Here is a 1333-residue protein sequence, read N- to C-terminus: DNA-directed RNA polymerase subunit beta' (1333 aa).

Zn(2+) is bound by residues Cys-60, Cys-62, Cys-75, and Cys-78. Mg(2+) is bound by residues Asp-535, Asp-537, and Asp-539. The Zn(2+) site is built by Cys-901, Cys-983, Cys-990, and Cys-993.

Belongs to the RNA polymerase beta' chain family. In terms of assembly, the RNAP catalytic core consists of 2 alpha, 1 beta, 1 beta' and 1 omega subunit. When a sigma factor is associated with the core the holoenzyme is formed, which can initiate transcription. Requires Mg(2+) as cofactor. Zn(2+) serves as cofactor.

It carries out the reaction RNA(n) + a ribonucleoside 5'-triphosphate = RNA(n+1) + diphosphate. In terms of biological role, DNA-dependent RNA polymerase catalyzes the transcription of DNA into RNA using the four ribonucleoside triphosphates as substrates. The protein is DNA-directed RNA polymerase subunit beta' of Corynebacterium glutamicum (strain ATCC 13032 / DSM 20300 / JCM 1318 / BCRC 11384 / CCUG 27702 / LMG 3730 / NBRC 12168 / NCIMB 10025 / NRRL B-2784 / 534).